Here is a 2061-residue protein sequence, read N- to C-terminus: Myoferlin (2061 aa).

One can recognise a C2 1 domain in the interval M1–Y101. At M1–K2025 the chain is on the cytoplasmic side. The tract at residues G123–T172 is disordered. Residues D146–R156 are compositionally biased toward acidic residues. The residue at position 174 (S174) is a Phosphoserine. 2 consecutive C2 domains span residues R181–L300 and D339–F474. Positions K186–K281 are necessary for interaction with EHD2. A disordered region spans residues L323 to D342. Ca(2+) contacts are provided by D390, D396, D444, D446, and D452. At K553 the chain carries N6-acetyllysine. S729 carries the post-translational modification Phosphoserine. The residue at position 884 (K884) is an N6-acetyllysine. Residues E938–L967 are disordered. C2 domains are found at residues G1123–H1251 and L1282–D1410. Positions 1155, 1161, 1217, and 1219 each coordinate Ca(2+). The residue at position 1507 (K1507) is an N6-acetyllysine. C2 domains are found at residues P1536 to G1654 and G1772 to R1920. Positions 1569, 1575, 1624, 1626, 1891, 1894, and 1897 each coordinate Ca(2+). S1915 is subject to Phosphoserine. A helical transmembrane segment spans residues W2026–Y2046. The Extracellular segment spans residues S2047–V2061.

Belongs to the ferlin family. In terms of assembly, interacts with DNM2 and KDR. Interacts with EHD1. Interacts with EHD2; the interaction is direct. Interacts with RIPOR2. Ca(2+) is required as a cofactor. Expressed in myoblast and endothelial cells (at protein level). Highly expressed in cardiac and skeletal muscles. Also present in lung, and at very low levels in kidney, placenta and brain.

Its subcellular location is the cell membrane. It is found in the nucleus membrane. The protein resides in the cytoplasmic vesicle membrane. Functionally, calcium/phospholipid-binding protein that plays a role in the plasmalemma repair mechanism of endothelial cells that permits rapid resealing of membranes disrupted by mechanical stress. Involved in endocytic recycling. Implicated in VEGF signal transduction by regulating the levels of the receptor KDR. The polypeptide is Myoferlin (MYOF) (Homo sapiens (Human)).